Reading from the N-terminus, the 382-residue chain is Na(+)/H(+) antiporter NhaA (382 aa).

The next 11 helical transmembrane spans lie at 14-34 (AGGILLVIAAAIAMVIANSAM), 47-67 (FGMSVSHWINDGLMAVFFLLI), 87-107 (IFPAIAAVGGMLAPALIYVAF), 117-137 (GWAIPAATDIAFALGIMALLG), 146-166 (VFLLALAIIDDLGVVVIIALF), 171-191 (LSTIALTIGFIMTGVLFMLNA), 205-225 (LILWIAVLKSGVHATLAGVVI), 247-267 (ALHPYVAFAILPVFAFANAGI), 271-291 (GVSLAGLTSMLPLGVALGLFL), 321-341 (IFAVSVLCGIGFTMSIFISSL), and 353-373 (YARLGILMGSTTAALLGYSLL).

Belongs to the NhaA Na(+)/H(+) (TC 2.A.33) antiporter family.

Its subcellular location is the cell inner membrane. It carries out the reaction Na(+)(in) + 2 H(+)(out) = Na(+)(out) + 2 H(+)(in). Na(+)/H(+) antiporter that extrudes sodium in exchange for external protons. This Vibrio cholerae serotype O1 (strain ATCC 39541 / Classical Ogawa 395 / O395) protein is Na(+)/H(+) antiporter NhaA.